The sequence spans 396 residues: Cystathionine beta-lyase (396 aa).

K214 is subject to N6-(pyridoxal phosphate)lysine.

It belongs to the trans-sulfuration enzymes family. In terms of assembly, homodimer. The cofactor is pyridoxal 5'-phosphate.

Its subcellular location is the cytoplasm. It catalyses the reaction L,L-cystathionine + H2O = L-homocysteine + pyruvate + NH4(+). The enzyme catalyses an S-substituted L-cysteine + H2O = a thiol + pyruvate + NH4(+). The protein operates within amino-acid biosynthesis; L-methionine biosynthesis via de novo pathway; L-homocysteine from L-cystathionine: step 1/1. Functionally, catalyzes the cleavage of cystathionine to homocysteine, pyruvate and ammonia during methionine biosynthesis. Also has cytotoxic activity toward osteogenic, osteosarcoma and tracheal cells, in vitro. The chemical basis for cell toxicity might be the formation and subsequent transfer of sulfane-sulfur to proteins, derived via beta-cystathionase cleavage of L-cystine. This chain is Cystathionine beta-lyase (metC), found in Bordetella avium.